Consider the following 330-residue polypeptide: D-cysteine desulfhydrase (330 aa).

Lys52 is subject to N6-(pyridoxal phosphate)lysine.

This sequence belongs to the ACC deaminase/D-cysteine desulfhydrase family. In terms of assembly, homodimer. Pyridoxal 5'-phosphate serves as cofactor.

It carries out the reaction D-cysteine + H2O = hydrogen sulfide + pyruvate + NH4(+) + H(+). In terms of biological role, catalyzes the alpha,beta-elimination reaction of D-cysteine and of several D-cysteine derivatives. It could be a defense mechanism against D-cysteine. This chain is D-cysteine desulfhydrase, found in Yersinia pestis.